The chain runs to 307 residues: Pantothenate kinase (307 aa).

87 to 94 contributes to the ATP binding site; the sequence is GSVAVGKS.

The protein belongs to the prokaryotic pantothenate kinase family.

Its subcellular location is the cytoplasm. The catalysed reaction is (R)-pantothenate + ATP = (R)-4'-phosphopantothenate + ADP + H(+). It participates in cofactor biosynthesis; coenzyme A biosynthesis; CoA from (R)-pantothenate: step 1/5. The polypeptide is Pantothenate kinase (Vibrio vulnificus (strain CMCP6)).